Reading from the N-terminus, the 117-residue chain is Biofilm growth-associated repressor (117 aa).

An HTH arsR-type domain is found at 20–114 (AMEKRATEVA…ALYAIFCAPE (95 aa)). The segment at residues 54-77 (VGELEAKLDIRQPTLSQQLGVLRE) is a DNA-binding region (H-T-H motif).

In terms of biological role, represses an operon that comprises at least itself and blh. Binds to a palindromic AT-rich sequence spanning the -10 region of the blh promoter and blocks transcription of the operon. The chain is Biofilm growth-associated repressor (bigR) from Agrobacterium fabrum (strain C58 / ATCC 33970) (Agrobacterium tumefaciens (strain C58)).